The primary structure comprises 364 residues: Lipoyl synthase, mitochondrial (364 aa).

The interval Pro-34 to Tyr-53 is disordered. [4Fe-4S] cluster-binding residues include Cys-99, Cys-104, Cys-110, Cys-130, Cys-134, Cys-137, and Ser-345. The region spanning Glu-115–Leu-334 is the Radical SAM core domain.

This sequence belongs to the radical SAM superfamily. Lipoyl synthase family. [4Fe-4S] cluster is required as a cofactor.

It is found in the mitochondrion. It carries out the reaction [[Fe-S] cluster scaffold protein carrying a second [4Fe-4S](2+) cluster] + N(6)-octanoyl-L-lysyl-[protein] + 2 oxidized [2Fe-2S]-[ferredoxin] + 2 S-adenosyl-L-methionine + 4 H(+) = [[Fe-S] cluster scaffold protein] + N(6)-[(R)-dihydrolipoyl]-L-lysyl-[protein] + 4 Fe(3+) + 2 hydrogen sulfide + 2 5'-deoxyadenosine + 2 L-methionine + 2 reduced [2Fe-2S]-[ferredoxin]. The protein operates within protein modification; protein lipoylation via endogenous pathway; protein N(6)-(lipoyl)lysine from octanoyl-[acyl-carrier-protein]: step 2/2. Its function is as follows. Catalyzes the radical-mediated insertion of two sulfur atoms into the C-6 and C-8 positions of the octanoyl moiety bound to the lipoyl domains of lipoate-dependent enzymes, thereby converting the octanoylated domains into lipoylated derivatives. This chain is Lipoyl synthase, mitochondrial, found in Drosophila grimshawi (Hawaiian fruit fly).